Reading from the N-terminus, the 485-residue chain is NADH-quinone oxidoreductase subunit N (485 aa).

Transmembrane regions (helical) follow at residues 8–28, 35–55, 71–91, 105–125, 127–147, 159–179, 203–223, 235–255, 271–291, 297–317, 326–346, 373–393, 408–430, and 455–475; these read LIAL…MLSI, FLNA…LWFV, GFAM…CTFA, FYLL…ANHL, SLFL…GYAF, YTIL…LVYA, LLAG…LVPF, PAPV…GVVM, VVLA…ALSQ, LLGY…IALQ, VGVY…VVSL, AAVM…LGFI, WWLV…RVAV, and IVVL…QPLI.

This sequence belongs to the complex I subunit 2 family. In terms of assembly, NDH-1 is composed of 13 different subunits. Subunits NuoA, H, J, K, L, M, N constitute the membrane sector of the complex.

Its subcellular location is the cell inner membrane. The enzyme catalyses a quinone + NADH + 5 H(+)(in) = a quinol + NAD(+) + 4 H(+)(out). NDH-1 shuttles electrons from NADH, via FMN and iron-sulfur (Fe-S) centers, to quinones in the respiratory chain. The immediate electron acceptor for the enzyme in this species is believed to be ubiquinone. Couples the redox reaction to proton translocation (for every two electrons transferred, four hydrogen ions are translocated across the cytoplasmic membrane), and thus conserves the redox energy in a proton gradient. This is NADH-quinone oxidoreductase subunit N from Escherichia coli (strain ATCC 8739 / DSM 1576 / NBRC 3972 / NCIMB 8545 / WDCM 00012 / Crooks).